We begin with the raw amino-acid sequence, 89 residues long: CRISPR-associated endoribonuclease Cas2 2 (89 aa).

D9 lines the Mg(2+) pocket.

It belongs to the CRISPR-associated endoribonuclease Cas2 protein family. Homodimer, forms a heterotetramer with a Cas1 homodimer. Requires Mg(2+) as cofactor.

CRISPR (clustered regularly interspaced short palindromic repeat), is an adaptive immune system that provides protection against mobile genetic elements (viruses, transposable elements and conjugative plasmids). CRISPR clusters contain sequences complementary to antecedent mobile elements and target invading nucleic acids. CRISPR clusters are transcribed and processed into CRISPR RNA (crRNA). Functions as a ssRNA-specific endoribonuclease. Involved in the integration of spacer DNA into the CRISPR cassette. This is CRISPR-associated endoribonuclease Cas2 2 from Methanospirillum hungatei JF-1 (strain ATCC 27890 / DSM 864 / NBRC 100397 / JF-1).